We begin with the raw amino-acid sequence, 71 residues long: Disintegrin simusmin (71 aa).

The Disintegrin domain occupies 1–71 (AGEECDCGSP…SADCPRNPFH (71 aa)). Cystine bridges form between Cys5–Cys20, Cys7–Cys15, Cys14–Cys37, Cys28–Cys34, Cys33–Cys58, and Cys46–Cys65. The Cell attachment site motif lies at 50 to 52 (RGD).

It belongs to the venom metalloproteinase (M12B) family. P-II subfamily. P-IIa sub-subfamily. In terms of assembly, monomer. In terms of tissue distribution, expressed by the venom gland.

The protein localises to the secreted. In terms of biological role, inhibits ADP- (IC(50)=56 nM) and collagen-induced (IC(50)=49 nM) aggregation of human platelets. In vitro, inhibits adhesion of endothelial cells to vitronectin, type-I collagen and, to a lower degree, fibronectin and laminin. The chain is Disintegrin simusmin from Crotalus simus (Central American rattlesnake).